Consider the following 246-residue polypeptide: Bromelain inhibitor (246 aa).

Residues 1 to 19 (MNMLLLFLHEVINGERVTL) form the signal peptide. Intrachain disulfides connect Cys22/Cys42, Cys25/Cys74, Cys27/Cys40, Cys49/Cys56, and Cys53/Cys65. Positions 31–35 (TSSSD) are excised as a propeptide. Propeptides lie at residues 77–95 (PVSS…RVTL) and 107–111 (TSSSD). 5 cysteine pairs are disulfide-bonded: Cys98–Cys118, Cys101–Cys150, Cys103–Cys116, Cys125–Cys132, and Cys129–Cys141. 2 consecutive propeptides follow at residues 153–171 (PVSS…RVTL) and 183–187 (TSSSD). 5 cysteine pairs are disulfide-bonded: Cys174/Cys194, Cys177/Cys226, Cys179/Cys192, Cys201/Cys208, and Cys205/Cys217. The propeptide occupies 229–246 (PVSSWEARQKIKLLQGRE).

The protein belongs to the protease inhibitor I67 family. In terms of assembly, each inhibitor is composed of two chains, designated A and B linked by three disulfide bonds.

In terms of biological role, weak inhibitor of cysteine proteinases. In Ananas comosus (Pineapple), this protein is Bromelain inhibitor.